The sequence spans 842 residues: Protein P (842 aa).

Positions 1-177 (MPLSYQHFRR…FCGSPYSWEQ (177 aa)) are terminal protein domain (TP). The interval 178–345 (ELHHGAFLDG…YCLTHLVNLL (168 aa)) is spacer. The interval 186–273 (DGPSRMGEES…AKNIASRSAS (88 aa)) is disordered. A compositionally biased stretch (polar residues) spans 223-239 (GPQSQQRPLDGSQQGRS). The segment at 346–689 (EDWGPCTEHG…YLNLYPVARQ (344 aa)) is polymerase/reverse transcriptase domain (RT). In terms of domain architecture, Reverse transcriptase spans 356–599 (KHHIRIPRTP…YSLNFMGYVI (244 aa)). Asp-428, Asp-550, and Asp-551 together coordinate Mg(2+).

Belongs to the hepadnaviridae P protein family.

It carries out the reaction DNA(n) + a 2'-deoxyribonucleoside 5'-triphosphate = DNA(n+1) + diphosphate. The catalysed reaction is Endonucleolytic cleavage to 5'-phosphomonoester.. With respect to regulation, activated by host HSP70 and HSP40 in vitro to be able to bind the epsilon loop of the pgRNA. Because deletion of the RNase H region renders the protein partly chaperone-independent, the chaperones may be needed indirectly to relieve occlusion of the RNA-binding site by this domain. Inhibited by several reverse-transcriptase inhibitors: Lamivudine, Adefovir and Entecavir. Functionally, multifunctional enzyme that converts the viral RNA genome into dsDNA in viral cytoplasmic capsids. This enzyme displays a DNA polymerase activity that can copy either DNA or RNA templates, and a ribonuclease H (RNase H) activity that cleaves the RNA strand of RNA-DNA heteroduplexes in a partially processive 3'- to 5'-endonucleasic mode. Neo-synthesized pregenomic RNA (pgRNA) are encapsidated together with the P protein, and reverse-transcribed inside the nucleocapsid. Initiation of reverse-transcription occurs first by binding the epsilon loop on the pgRNA genome, and is initiated by protein priming, thereby the 5'-end of (-)DNA is covalently linked to P protein. Partial (+)DNA is synthesized from the (-)DNA template and generates the relaxed circular DNA (RC-DNA) genome. After budding and infection, the RC-DNA migrates in the nucleus, and is converted into a plasmid-like covalently closed circular DNA (cccDNA). The activity of P protein does not seem to be necessary for cccDNA generation, and is presumably released from (+)DNA by host nuclear DNA repair machinery. The polypeptide is Protein P (Homo sapiens (Human)).